Reading from the N-terminus, the 269-residue chain is MKRSIKHIYLLSDATGETVERVVRAALSQFRDVEARFHRVTRIRSREDVIWALEEVLREPGMVVYTLVDTELAQLLRDEAEAHGLDAIDLISPLLFKLSDFFGEAPQKEPGLLHQINSEYHKRVDAVDFTVKHDDGQDPRGLAKADFILVGVSRSSKTPLSMYLAHKGYKVANVPIVKGIDPPPELYKVDQKRVVGLIIDAERLVQIRTARLRNLGQMPKGSYADYERIEEELEFCRRLYRRNPQWLVIDVTKKSVEESAAEIIQKLAG.

151–158 lines the ADP pocket; that stretch reads GVSRSSKT.

Belongs to the pyruvate, phosphate/water dikinase regulatory protein family. PDRP subfamily.

The catalysed reaction is N(tele)-phospho-L-histidyl/L-threonyl-[pyruvate, phosphate dikinase] + ADP = N(tele)-phospho-L-histidyl/O-phospho-L-threonyl-[pyruvate, phosphate dikinase] + AMP + H(+). The enzyme catalyses N(tele)-phospho-L-histidyl/O-phospho-L-threonyl-[pyruvate, phosphate dikinase] + phosphate + H(+) = N(tele)-phospho-L-histidyl/L-threonyl-[pyruvate, phosphate dikinase] + diphosphate. Functionally, bifunctional serine/threonine kinase and phosphorylase involved in the regulation of the pyruvate, phosphate dikinase (PPDK) by catalyzing its phosphorylation/dephosphorylation. This chain is Putative pyruvate, phosphate dikinase regulatory protein, found in Geobacter sulfurreducens (strain ATCC 51573 / DSM 12127 / PCA).